We begin with the raw amino-acid sequence, 199 residues long: Small ribosomal subunit protein eS1 (199 aa).

The protein belongs to the eukaryotic ribosomal protein eS1 family.

The chain is Small ribosomal subunit protein eS1 from Pyrococcus horikoshii (strain ATCC 700860 / DSM 12428 / JCM 9974 / NBRC 100139 / OT-3).